Here is a 358-residue protein sequence, read N- to C-terminus: 3-O-methylredipecamine 2-O-methyltransferase IpeOMT3 (358 aa).

The S-adenosyl-L-methionine site is built by glycine 193, aspartate 216, aspartate 236, methionine 237, and lysine 250. Catalysis depends on histidine 254, which acts as the Proton acceptor.

It belongs to the class I-like SAM-binding methyltransferase superfamily. Cation-independent O-methyltransferase family. In terms of tissue distribution, expressed in roots.

The protein resides in the cytoplasm. The protein localises to the cytosol. The enzyme catalyses (S)-reticuline + S-adenosyl-L-methionine = (S)-laudanine + S-adenosyl-L-homocysteine + H(+). It participates in alkaloid biosynthesis. Functionally, O-methyltransferase involved in the biosynthesis of ipecac and benzylisoquinoline monoterpenoid-isoquinoline alkaloids natural products, starting by the condensation of dopamine and secologanin, and including emetine and cephaeline, drugs used both as anti-protozoal (e.g. treatment of ameobiasis) and as emetic agents. Catalyzes 2-O-methylation of 3-O-methylredipecamine and, with less efficiency, the 7-O-methylation of (S)-coclaurine, (R,S)-N-methylcoclaurine, (R,S)-4'-O-methylcoclaurine, (R,S)-6-O-methyllaudanosoline, nororientaline, (S)-norreticuline and (S)-reticuline. In Carapichea ipecacuanha (Ipecac), this protein is 3-O-methylredipecamine 2-O-methyltransferase IpeOMT3.